The primary structure comprises 673 residues: Pesticin receptor (673 aa).

An N-terminal signal peptide occupies residues 1 to 22; sequence MKMTRLYPLALGGLLLPAIANA. Positions 30 to 37 match the TonB box motif; the sequence is STLVVTAS. Residues 41 to 155 enclose the TBDR plug domain; it reads SRSASANNVS…QGGIINIVTQ (115 aa). The TBDR beta-barrel domain maps to 160–672; that stretch reads TPRGYIEGGV…TVGINTRIDF (513 aa). Residues 657 to 673 carry the TonB C-terminal box motif; the sequence is QVNMGRTVGINTRIDFF.

The protein belongs to the TonB-dependent receptor family.

The protein resides in the cell outer membrane. In terms of biological role, receptor for the bacteriocin pesticin and for the siderophore yersiniabactin. The chain is Pesticin receptor (fyuA) from Yersinia pestis.